A 540-amino-acid polypeptide reads, in one-letter code: Light-independent protochlorophyllide reductase subunit B (540 aa).

A [4Fe-4S] cluster-binding site is contributed by Asp-36. Residue Asp-287 is the Proton donor of the active site. A substrate-binding site is contributed by 422–423 (GL).

It belongs to the ChlB/BchB/BchZ family. Protochlorophyllide reductase is composed of three subunits; BchL, BchN and BchB. Forms a heterotetramer of two BchB and two BchN subunits. [4Fe-4S] cluster serves as cofactor.

The enzyme catalyses chlorophyllide a + oxidized 2[4Fe-4S]-[ferredoxin] + 2 ADP + 2 phosphate = protochlorophyllide a + reduced 2[4Fe-4S]-[ferredoxin] + 2 ATP + 2 H2O. It functions in the pathway porphyrin-containing compound metabolism; bacteriochlorophyll biosynthesis (light-independent). Its function is as follows. Component of the dark-operative protochlorophyllide reductase (DPOR) that uses Mg-ATP and reduced ferredoxin to reduce ring D of protochlorophyllide (Pchlide) to form chlorophyllide a (Chlide). This reaction is light-independent. The NB-protein (BchN-BchB) is the catalytic component of the complex. The chain is Light-independent protochlorophyllide reductase subunit B from Rhodopseudomonas palustris (strain TIE-1).